Consider the following 424-residue polypeptide: CinA-like protein (424 aa).

This sequence belongs to the CinA family.

In Shewanella halifaxensis (strain HAW-EB4), this protein is CinA-like protein.